Here is a 473-residue protein sequence, read N- to C-terminus: Phosphatidylserine synthase 1 (473 aa).

The Cytoplasmic portion of the chain corresponds to 1-35; it reads MAACVGSRTLSKDDVNYRLHFRMINEQQVEDITLE. Residues 36-56 form a helical membrane-spanning segment; that stretch reads FFYRPHTITLLSFTILSLMAF. At 57–72 the chain is on the lumenal side; that stretch reads AFTRDDSVPEENIWRG. The chain crosses the membrane as a helical span at residues 73–93; that stretch reads ILSVIFFFLIISVLAFPNGPF. Topologically, residues 94-102 are cytoplasmic; that stretch reads TRPHPAIWR. A helical transmembrane segment spans residues 103–123; the sequence is MVFGLSVLYFLFLVFVLFLNF. Over 124–186 the chain is Lumenal; that stretch reads EQVKAVMYWL…AMKALLIRSY (63 aa). Residues 187–207 form a helical membrane-spanning segment; sequence GLCWTISITWELTELFFMHLL. The Cytoplasmic segment spans residues 208-216; that stretch reads PNFAECWWD. The helical transmembrane segment at 217 to 237 threads the bilayer; it reads QVILDILLCNGGGIWLGMVVC. Topologically, residues 238-286 are lumenal; sequence RFLEMRTYHWASFKDIHTTTGKIKRAVLQFTPASWTYVRWFDPKSSFQR. Residues 287–307 traverse the membrane as a helical segment; the sequence is VAGIYLFMIIWQLTELNTFFL. The Cytoplasmic portion of the chain corresponds to 308–319; sequence KHIFVFQASHPL. The chain crosses the membrane as a helical span at residues 320–342; sequence SWGRILFIGIITAPTVRQYYAYL. Topologically, residues 343-355 are lumenal; it reads TDTQCKRVGTQCW. The chain crosses the membrane as a helical span at residues 356–376; that stretch reads VFGVIAFLEAIVCIKFGQDLF. The Cytoplasmic segment spans residues 377-380; it reads SKTQ. A helical transmembrane segment spans residues 381 to 401; it reads ILYVVFWLLCVAFTTFLCLYG. The Lumenal portion of the chain corresponds to 402-473; the sequence is MVWYAEYYGH…SKVTNGIGKK (72 aa). The interval 420-473 is disordered; it reads EDSPYSPDASWLHSKFSKGADNSPPKHPVNSESHSSRRRNRHSRSKVTNGIGKK. Positions 455–464 are enriched in basic residues; that stretch reads SRRRNRHSRS.

This sequence belongs to the phosphatidyl serine synthase family.

It localises to the endoplasmic reticulum membrane. It catalyses the reaction a 1,2-diacyl-sn-glycero-3-phosphoethanolamine + L-serine = a 1,2-diacyl-sn-glycero-3-phospho-L-serine + ethanolamine. The enzyme catalyses a 1,2-diacyl-sn-glycero-3-phosphocholine + L-serine = a 1,2-diacyl-sn-glycero-3-phospho-L-serine + choline. The protein operates within phospholipid metabolism; phosphatidylserine biosynthesis. Catalyzes a base-exchange reaction in which the polar head group of phosphatidylethanolamine (PE) or phosphatidylcholine (PC) is replaced by L-serine. Catalyzes mainly the conversion of phosphatidylcholine but also converts, in vitro and to a lesser extent, phosphatidylethanolamine. The polypeptide is Phosphatidylserine synthase 1 (PTDSS1) (Gallus gallus (Chicken)).